The following is a 220-amino-acid chain: Protein-L-isoaspartate O-methyltransferase (220 aa).

S70 is a catalytic residue.

It belongs to the methyltransferase superfamily. L-isoaspartyl/D-aspartyl protein methyltransferase family.

The protein resides in the cytoplasm. The enzyme catalyses [protein]-L-isoaspartate + S-adenosyl-L-methionine = [protein]-L-isoaspartate alpha-methyl ester + S-adenosyl-L-homocysteine. In terms of biological role, catalyzes the methyl esterification of L-isoaspartyl residues in peptides and proteins that result from spontaneous decomposition of normal L-aspartyl and L-asparaginyl residues. It plays a role in the repair and/or degradation of damaged proteins. In Halorhodospira halophila (strain DSM 244 / SL1) (Ectothiorhodospira halophila (strain DSM 244 / SL1)), this protein is Protein-L-isoaspartate O-methyltransferase.